Here is a 219-residue protein sequence, read N- to C-terminus: Apoptosis regulator OPG045 (219 aa).

It belongs to the orthopoxvirus OPG045 family. Homodimer. Interacts with host pro-apoptotic protein BCL2L11 (via BH3 domain). Interacts with host NLRP1. Interacts with host BAK.

The protein localises to the host mitochondrion outer membrane. Its subcellular location is the host cytoplasm. In terms of biological role, plays a role in evading host innate immune response by inhibiting host inflammasome activation. Interacts with and inhibits NLR-mediated interleukin-1 beta/IL1B production in infected cells. At the host mitochondria outer membrane, interacts with the BH3 domain of host BAK and prevents BAK from binding active BAX. In turn, host apoptosis is inhibited. The sequence is that of Apoptosis regulator OPG045 (OPG045) from Cynomys gunnisoni (Gunnison's prairie dog).